The chain runs to 299 residues: 5,10-dihydrophenazine-1-carboxylate 9-dimethylallyltransferase (299 aa).

It belongs to the aromatic prenyltransferase family.

The enzyme catalyses 5,10-dihydrophenazine 1-carboxylate + dimethylallyl diphosphate = 5,10-dihydro-9-dimethylallylphenazine 1-carboxylate + diphosphate. It participates in antibiotic biosynthesis; phenazine biosynthesis. With respect to regulation, does not require magnesium or any other divalent metal ions for activity. In terms of biological role, involved in the biosynthesis of prenylated phenazines. Catalyzes the transfer of a dimethylallyl moiety to C-9 of 5,10-dihydrophenazine 1-carboxylate (dihydro-PCA). Specific for both dimethylallyl diphosphate and dihydro-PCA. This Streptomyces anulatus (Streptomyces chrysomallus) protein is 5,10-dihydrophenazine-1-carboxylate 9-dimethylallyltransferase.